We begin with the raw amino-acid sequence, 328 residues long: Phosphate acetyltransferase (328 aa).

Belongs to the phosphate acetyltransferase and butyryltransferase family.

It localises to the cytoplasm. The enzyme catalyses acetyl-CoA + phosphate = acetyl phosphate + CoA. It functions in the pathway metabolic intermediate biosynthesis; acetyl-CoA biosynthesis; acetyl-CoA from acetate: step 2/2. The chain is Phosphate acetyltransferase (pta) from Staphylococcus aureus (strain MRSA252).